The primary structure comprises 109 residues: UPF0060 membrane protein RHA1_ro06609 (109 aa).

4 consecutive transmembrane segments (helical) span residues 7–27 (VALF…VWQG), 33–53 (GWIW…VATL), 62–82 (ILAA…MVAD), and 88–108 (RWDV…MYAP).

This sequence belongs to the UPF0060 family.

The protein resides in the cell membrane. The chain is UPF0060 membrane protein RHA1_ro06609 from Rhodococcus jostii (strain RHA1).